We begin with the raw amino-acid sequence, 723 residues long: MTDSLEYNDINAEVRGVLCSGRLKMTEQNIIFKNTKTGKVEQISAEDIDLINSQKFVGTWGLRVFTKGGVLHRFTGFRDSEHEKLGKFIKAAYSQEMVEKEMCVKGWNWGTARFMGSVLSFDKESKTIFEVPLSHVSQCVTGKNEVTLEFHQNDDAPVGLLEMRFHIPAVESAEEDPVDKFHQNVMSKASVISASGESIAIFREIQILTPRGRYDIKIFSTFFQLHGKTFDYKIPMDSVLRLFMLPHKDSRQMFFVLSLDPPIKQGQTRYHYLVLLFAPDEETTIELPFSEAELRDKYEGKLEKEISGPVYEVMGKVMKVLIGRKITGPGNFIGHSGTAAVGCSFKAAAGYLYPLERGFIYIHKPPLHIRFEEISSVNFARSGGSTRSFDFEVTLKNGTVHIFSSIEKEEYAKLFDYITQKKLHVSNMGKDKSGYKDVDFGDSDNENEPDAYLARLKAEAREKEEDDDDGDSDEESTDEDFKPNENESDVAEEYDSNVESDSDDDSDASGGGGDSDGAKKKKEKKSEKKEKKEKKHKEKERTKKPSKKKKDSGKPKRATTAFMLWLNDTRESIKRENPGIKVTEIAKKGGEMWKELKDKSKWEDAAAKDKQRYHDEMRNYKPEAGGDSDNEKGGKSSKKRKTEPSPSKKANTSGSGFKSKEYISDDDSTSSDDEKDNEPAKKKSKPPSDGDAKKKKAKSESEPEESEEDSNASDEDEEDEASD.

Ser443 is modified (phosphoserine). 2 disordered regions span residues 459–564 (EARE…AFML) and 586–723 (AKKG…EASD). Acidic residues-rich tracts occupy residues 464-478 (EEDDDDGDSDEESTD) and 486-507 (NESDVAEEYDSNVESDSDDDSD). The span at 531–557 (KKEKKHKEKERTKKPSKKKKDSGKPKR) shows a compositional bias: basic residues. Residues 555-621 (PKRATTAFML…RYHDEMRNYK (67 aa)) constitute a DNA-binding region (HMG box). Positions 586–621 (AKKGGEMWKELKDKSKWEDAAAKDKQRYHDEMRNYK) are enriched in basic and acidic residues. Ser628 bears the Phosphoserine mark. A compositionally biased stretch (polar residues) spans 644 to 656 (PSPSKKANTSGSG). Phosphoserine is present on residues Ser664 and Ser668. Positions 664-676 (SDDDSTSSDDEKD) are enriched in acidic residues. A Phosphothreonine modification is found at Thr669. Phosphoserine is present on residues Ser670 and Ser671. Positions 677 to 692 (NEPAKKKSKPPSDGDA) are enriched in basic and acidic residues. Positions 702–723 (EPEESEEDSNASDEDEEDEASD) are enriched in acidic residues.

The protein belongs to the SSRP1 family. As to quaternary structure, component of the FACT complex, a stable heterodimer of dre4/spt16 and Ssrp. Interacts with CHD1 and TRL/GAGA. Expressed at highest levels in nurse cells of the ovary.

The protein localises to the nucleus. It is found in the chromosome. Its subcellular location is the nucleolus. Functionally, component of the FACT complex, a general chromatin factor that acts to reorganize nucleosomes. The FACT complex is involved in multiple processes that require DNA as a template such as mRNA elongation, DNA replication and DNA repair. During transcription elongation the FACT complex acts as a histone chaperone that both destabilizes and restores nucleosomal structure. It facilitates the passage of RNA polymerase II and transcription by promoting the dissociation of one histone H2A-H2B dimer from the nucleosome, then subsequently promotes the reestablishment of the nucleosome following the passage of RNA polymerase II. Binds specifically to single-stranded DNA and RNA with highest affinity for nucleotides G and U. The FACT complex is required for expression of Hox genes. This is FACT complex subunit Ssrp1 (Ssrp) from Drosophila melanogaster (Fruit fly).